A 494-amino-acid chain; its full sequence is Probable cytosol aminopeptidase (494 aa).

The Mn(2+) site is built by K260 and D265. Residue K272 is part of the active site. The Mn(2+) site is built by D283, D342, and E344. R346 is an active-site residue.

Belongs to the peptidase M17 family. Mn(2+) is required as a cofactor.

The protein resides in the cytoplasm. The enzyme catalyses Release of an N-terminal amino acid, Xaa-|-Yaa-, in which Xaa is preferably Leu, but may be other amino acids including Pro although not Arg or Lys, and Yaa may be Pro. Amino acid amides and methyl esters are also readily hydrolyzed, but rates on arylamides are exceedingly low.. The catalysed reaction is Release of an N-terminal amino acid, preferentially leucine, but not glutamic or aspartic acids.. Presumably involved in the processing and regular turnover of intracellular proteins. Catalyzes the removal of unsubstituted N-terminal amino acids from various peptides. The chain is Probable cytosol aminopeptidase from Bacillus thuringiensis subsp. konkukian (strain 97-27).